We begin with the raw amino-acid sequence, 641 residues long: Bifunctional protein glk (641 aa).

Residues 1 to 21 (MSTGAQTKAAEASQHADGPRL) are disordered. The segment at 1–340 (MSTGAQTKAA…QLSNRTGGAS (340 aa)) is glucokinase. 23–28 (ADVGGT) is a binding site for ATP. The region spanning 341–417 (SAVFERIRQM…LKLATGLTGT (77 aa)) is the HTH rpiR-type domain. A putative HTH-type transcriptional regulator region spans residues 341 to 641 (SAVFERIRQM…SHGAAPAAKE (301 aa)). A DNA-binding region (H-T-H motif) is located at residues 377-396 (IVDIARKADVSQPTVIRFCR). Positions 461–600 (AIDILNNARR…AVGVAIRRAS (140 aa)) constitute an SIS domain. A helical membrane pass occupies residues 576 to 596 (SMISRILHLVMIDILAVGVAI).

It in the N-terminal section; belongs to the bacterial glucokinase family.

The protein resides in the membrane. The enzyme catalyses D-glucose + ATP = D-glucose 6-phosphate + ADP + H(+). This Burkholderia thailandensis (strain ATCC 700388 / DSM 13276 / CCUG 48851 / CIP 106301 / E264) protein is Bifunctional protein glk (glk).